The primary structure comprises 95 residues: uncharacterized protein (95 aa).

This sequence belongs to the inositol monophosphatase superfamily.

This is an uncharacterized protein from Rhizobium leguminosarum bv. phaseoli.